The chain runs to 482 residues: Glutamyl-tRNA(Gln) amidotransferase subunit A (482 aa).

Active-site charge relay system residues include Lys75 and Ser150. Ser174 acts as the Acyl-ester intermediate in catalysis.

Belongs to the amidase family. GatA subfamily. In terms of assembly, heterotrimer of A, B and C subunits.

The enzyme catalyses L-glutamyl-tRNA(Gln) + L-glutamine + ATP + H2O = L-glutaminyl-tRNA(Gln) + L-glutamate + ADP + phosphate + H(+). Its function is as follows. Allows the formation of correctly charged Gln-tRNA(Gln) through the transamidation of misacylated Glu-tRNA(Gln) in organisms which lack glutaminyl-tRNA synthetase. The reaction takes place in the presence of glutamine and ATP through an activated gamma-phospho-Glu-tRNA(Gln). The chain is Glutamyl-tRNA(Gln) amidotransferase subunit A from Deinococcus radiodurans (strain ATCC 13939 / DSM 20539 / JCM 16871 / CCUG 27074 / LMG 4051 / NBRC 15346 / NCIMB 9279 / VKM B-1422 / R1).